Here is a 347-residue protein sequence, read N- to C-terminus: Membrane progestin receptor gamma-B (347 aa).

The Cytoplasmic segment spans residues 1–52; that stretch reads MLSLIKLQRVFNVHQVPKAFHEDGIISGYRHPRSSATECVWSLFQLTNETLN. A helical transmembrane segment spans residues 53–73; the sequence is VWTHFLPTWYFLWKLMTVLLM. The Extracellular segment spans residues 74 to 81; that stretch reads EDVWNEAY. Residues 82–102 traverse the membrane as a helical segment; the sequence is TWPLLVFLFSCCVYPLASSCA. Residues 103-114 are Cytoplasmic-facing; that stretch reads HTFSSMSTRARH. The chain crosses the membrane as a helical span at residues 115-135; that stretch reads ICYFFDYGALSFYSLGSAISY. Topologically, residues 136 to 138 are extracellular; it reads SAY. The chain crosses the membrane as a helical span at residues 139 to 159; the sequence is VFPDAWLSSSFHAYYISVAVF. Topologically, residues 160–201 are cytoplasmic; the sequence is NTVLSTSLACYSRLGLPLLHYSHDIVERFSERQCPRMSKVLR. Residues 202–222 form a helical membrane-spanning segment; it reads ILAFAYPYLFDNIPLFYRLFV. Residues 223 to 235 are Extracellular-facing; sequence CVGEGCTDNEANS. Residues 236-256 traverse the membrane as a helical segment; sequence VHVQHTLLAFLTSFLFATHLP. The Cytoplasmic segment spans residues 257-314; that stretch reads ERLAPGRFDYIGHSHQLFHVCAIIGTHFQMKAIEMDMGLRRSQLLASAPAISFNNTIG. Residues 315–335 traverse the membrane as a helical segment; it reads AALLCVSVSLGIICVYSLPLL. At 336 to 347 the chain is on the extracellular side; sequence YSSNPKNTANKE.

The protein belongs to the ADIPOR family.

It is found in the membrane. In terms of biological role, steroid membrane receptor. Binds progesterone. May be involved in oocyte maturation. The sequence is that of Membrane progestin receptor gamma-B from Danio rerio (Zebrafish).